Reading from the N-terminus, the 160-residue chain is MRDEDFCCAVCLDFFVEPCIIECGHSYCRFCIESHLNINEKCPLCRAHTGNPIRNRQLESLTMSYVSSRNISTEYYERMKSYQKKLLLQNRALVIIWTELNKRPGHSTELCNLVRNVQDEELKSEIMWQVKQQVGVGLEHTGDLQEENVTIRLKNSSSQQ.

The segment at cysteine 8–arginine 46 adopts an RING-type zinc-finger fold.

This is an uncharacterized protein from Caenorhabditis elegans.